A 250-amino-acid polypeptide reads, in one-letter code: tRNA (guanine-N(1)-)-methyltransferase (250 aa).

Residues Gly113 and 133–138 (VGDYVL) each bind S-adenosyl-L-methionine.

Belongs to the RNA methyltransferase TrmD family. Homodimer.

The protein resides in the cytoplasm. The catalysed reaction is guanosine(37) in tRNA + S-adenosyl-L-methionine = N(1)-methylguanosine(37) in tRNA + S-adenosyl-L-homocysteine + H(+). Specifically methylates guanosine-37 in various tRNAs. The protein is tRNA (guanine-N(1)-)-methyltransferase of Proteus mirabilis (strain HI4320).